The chain runs to 64 residues: UPF0434 protein MADE_1009415 (64 aa).

Belongs to the UPF0434 family.

This is UPF0434 protein MADE_1009415 from Alteromonas mediterranea (strain DSM 17117 / CIP 110805 / LMG 28347 / Deep ecotype).